The primary structure comprises 369 residues: MRN complex-interacting protein (369 aa).

S115 bears the Phosphoserine mark. Disordered stretches follow at residues 122–150, 209–245, and 282–317; these read GGGV…PRKR, PSFT…PCPA, and AQAE…TPMP. Residues 148-151 carry the Nuclear localization signal (NLS) motif; it reads RKRK. The segment covering 221-230 has biased composition (basic and acidic residues); the sequence is KGRESSREDL. The segment at 223 to 259 is necessary for the association with the MRN complex; that stretch reads RESSREDLDTMELVPRGEPPCPAQQVRTMSKWEQCLG.

It belongs to the MRNIP family. In terms of assembly, associates with the MRE11-RAD50-NBN (MRN) damage-sensing complex; this association is constitutive. Interacts with MRE11. Interacts with NBN. Interacts with RAD50. Phosphorylated; phosphorylation is constitutive and occurs in the absence of any DNA-damaging stimulus. Phosphorylation on Ser-115 is necessary for its nuclear retention.

The protein localises to the nucleus. The protein resides in the nucleoplasm. Its function is as follows. Plays a role in the cellular response to DNA damage and the maintenance of genome stability through its association with the MRN damage-sensing complex. Promotes chromatin loading and activity of the MRN complex to facilitate subsequent ATM-mediated DNA damage response signaling and DNA repair. This Bos taurus (Bovine) protein is MRN complex-interacting protein.